Consider the following 291-residue polypeptide: Cell division protein ZipA (291 aa).

The Periplasmic portion of the chain corresponds to 1–5 (MQELR). Residues 6 to 26 (FVLIIVGALAIAALLFHGLWT) traverse the membrane as a helical segment. Residues 27 to 291 (SKKEGKSKFG…QEFKVRAAQA (265 aa)) are Cytoplasmic-facing. Residues 29 to 51 (KEGKSKFGDKPLRKMKVESDDPP) show a composition bias toward basic and acidic residues. 2 disordered regions span residues 29–61 (KEGK…EDDF) and 92–119 (ELDE…VQPQ).

The protein belongs to the ZipA family. As to quaternary structure, interacts with FtsZ via their C-terminal domains.

The protein resides in the cell inner membrane. Essential cell division protein that stabilizes the FtsZ protofilaments by cross-linking them and that serves as a cytoplasmic membrane anchor for the Z ring. Also required for the recruitment to the septal ring of downstream cell division proteins. This chain is Cell division protein ZipA, found in Vibrio cholerae serotype O1 (strain ATCC 39541 / Classical Ogawa 395 / O395).